A 148-amino-acid polypeptide reads, in one-letter code: Deoxyuridine 5'-triphosphate nucleotidohydrolase (148 aa).

Residues 67–69 (RSG), asparagine 80, 84–86 (LID), and methionine 94 each bind substrate.

The protein belongs to the dUTPase family. It depends on Mg(2+) as a cofactor.

The catalysed reaction is dUTP + H2O = dUMP + diphosphate + H(+). Its pathway is pyrimidine metabolism; dUMP biosynthesis; dUMP from dCTP (dUTP route): step 2/2. In terms of biological role, this enzyme is involved in nucleotide metabolism: it produces dUMP, the immediate precursor of thymidine nucleotides and it decreases the intracellular concentration of dUTP so that uracil cannot be incorporated into DNA. The polypeptide is Deoxyuridine 5'-triphosphate nucleotidohydrolase (Burkholderia ambifaria (strain ATCC BAA-244 / DSM 16087 / CCUG 44356 / LMG 19182 / AMMD) (Burkholderia cepacia (strain AMMD))).